A 206-amino-acid polypeptide reads, in one-letter code: Peptidyl-tRNA hydrolase (206 aa).

Residue Tyr14 coordinates tRNA. The Proton acceptor role is filled by His19. Positions 64 and 66 each coordinate tRNA. Positions 182–206 are disordered; that stretch reads FNQKNKKKKEKEQPEAATDQLLENK.

This sequence belongs to the PTH family. In terms of assembly, monomer.

It localises to the cytoplasm. It catalyses the reaction an N-acyl-L-alpha-aminoacyl-tRNA + H2O = an N-acyl-L-amino acid + a tRNA + H(+). Functionally, hydrolyzes ribosome-free peptidyl-tRNAs (with 1 or more amino acids incorporated), which drop off the ribosome during protein synthesis, or as a result of ribosome stalling. In terms of biological role, catalyzes the release of premature peptidyl moieties from peptidyl-tRNA molecules trapped in stalled 50S ribosomal subunits, and thus maintains levels of free tRNAs and 50S ribosomes. The protein is Peptidyl-tRNA hydrolase of Desulforamulus reducens (strain ATCC BAA-1160 / DSM 100696 / MI-1) (Desulfotomaculum reducens).